The following is a 185-amino-acid chain: uncharacterized protein (185 aa).

It belongs to the EUO family.

This is an uncharacterized protein from Chlamydia muridarum (strain MoPn / Nigg).